The following is a 556-amino-acid chain: 2-isopropylmalate synthase (556 aa).

A Pyruvate carboxyltransferase domain is found at 33 to 307; it reads PIWCSSDLRD…HPQLDFSDID (275 aa). 4 residues coordinate Mg(2+): Asp42, His246, His248, and Asn282. The tract at residues 439–556 is regulatory domain; sequence ATSPYALASH…AVTQAEAKAA (118 aa).

The protein belongs to the alpha-IPM synthase/homocitrate synthase family. LeuA type 2 subfamily. As to quaternary structure, homodimer. Mg(2+) is required as a cofactor.

Its subcellular location is the cytoplasm. It carries out the reaction 3-methyl-2-oxobutanoate + acetyl-CoA + H2O = (2S)-2-isopropylmalate + CoA + H(+). It participates in amino-acid biosynthesis; L-leucine biosynthesis; L-leucine from 3-methyl-2-oxobutanoate: step 1/4. Catalyzes the condensation of the acetyl group of acetyl-CoA with 3-methyl-2-oxobutanoate (2-ketoisovalerate) to form 3-carboxy-3-hydroxy-4-methylpentanoate (2-isopropylmalate). The chain is 2-isopropylmalate synthase from Pseudomonas paraeruginosa (strain DSM 24068 / PA7) (Pseudomonas aeruginosa (strain PA7)).